The chain runs to 338 residues: MKVFYDKDCDLSLVKGKTVAIIGYGSQGHAHALNLHDSGVKVVVGLRKGGASWNKAANAGLEVAEVAEAVKRADIVMMLLPDENIAAVYRDEVHANIKAGAALAFAHGFNVHYGQVVPREDIDVIMAAPKAPGHTVRSTYSQGGGVPHLIAVYQDKSGSARDVALSYASANGGGRAGIIETNFREETETDLFGEQAVLCGGTVELIKAGFDTLVEAGYAPEMAYFECLHELKLIVDLIYEGGIANMNYSISNNAEFGEYETGPKVVTDATRQAMRECLTAIQTGEYAKKFILENAAGAPTLTSRRRINAESQIEQVGGKLRAMMPWIAANKLVDKAKN.

Positions 1 to 181 (MKVFYDKDCD…GGGRAGIIET (181 aa)) constitute a KARI N-terminal Rossmann domain. Residues 24-27 (YGSQ), R47, and S52 each bind NADP(+). The active site involves H107. G133 lines the NADP(+) pocket. Residues 182-327 (NFREETETDL…GKLRAMMPWI (146 aa)) enclose the KARI C-terminal knotted domain. Mg(2+)-binding residues include D190, E194, E226, and E230. S251 contributes to the substrate binding site.

This sequence belongs to the ketol-acid reductoisomerase family. Requires Mg(2+) as cofactor.

It catalyses the reaction (2R)-2,3-dihydroxy-3-methylbutanoate + NADP(+) = (2S)-2-acetolactate + NADPH + H(+). It carries out the reaction (2R,3R)-2,3-dihydroxy-3-methylpentanoate + NADP(+) = (S)-2-ethyl-2-hydroxy-3-oxobutanoate + NADPH + H(+). It participates in amino-acid biosynthesis; L-isoleucine biosynthesis; L-isoleucine from 2-oxobutanoate: step 2/4. It functions in the pathway amino-acid biosynthesis; L-valine biosynthesis; L-valine from pyruvate: step 2/4. Its function is as follows. Involved in the biosynthesis of branched-chain amino acids (BCAA). Catalyzes an alkyl-migration followed by a ketol-acid reduction of (S)-2-acetolactate (S2AL) to yield (R)-2,3-dihydroxy-isovalerate. In the isomerase reaction, S2AL is rearranged via a Mg-dependent methyl migration to produce 3-hydroxy-3-methyl-2-ketobutyrate (HMKB). In the reductase reaction, this 2-ketoacid undergoes a metal-dependent reduction by NADPH to yield (R)-2,3-dihydroxy-isovalerate. In Bordetella pertussis (strain Tohama I / ATCC BAA-589 / NCTC 13251), this protein is Ketol-acid reductoisomerase (NADP(+)).